The sequence spans 116 residues: Large ribosomal subunit protein uL18 (116 aa).

The protein belongs to the universal ribosomal protein uL18 family. As to quaternary structure, part of the 50S ribosomal subunit; part of the 5S rRNA/L5/L18/L25 subcomplex. Contacts the 5S and 23S rRNAs.

Its function is as follows. This is one of the proteins that bind and probably mediate the attachment of the 5S RNA into the large ribosomal subunit, where it forms part of the central protuberance. This Psychrobacter arcticus (strain DSM 17307 / VKM B-2377 / 273-4) protein is Large ribosomal subunit protein uL18.